Reading from the N-terminus, the 637-residue chain is 1-deoxy-D-xylulose-5-phosphate synthase (637 aa).

Residues His-73 and 113 to 115 (SHA) each bind thiamine diphosphate. Asp-145 is a Mg(2+) binding site. Thiamine diphosphate-binding positions include 146–147 (GA), Asn-175, Tyr-286, and Glu-367. Asn-175 contacts Mg(2+).

This sequence belongs to the transketolase family. DXPS subfamily. Homodimer. Mg(2+) serves as cofactor. It depends on thiamine diphosphate as a cofactor.

It catalyses the reaction D-glyceraldehyde 3-phosphate + pyruvate + H(+) = 1-deoxy-D-xylulose 5-phosphate + CO2. The protein operates within metabolic intermediate biosynthesis; 1-deoxy-D-xylulose 5-phosphate biosynthesis; 1-deoxy-D-xylulose 5-phosphate from D-glyceraldehyde 3-phosphate and pyruvate: step 1/1. Functionally, catalyzes the acyloin condensation reaction between C atoms 2 and 3 of pyruvate and glyceraldehyde 3-phosphate to yield 1-deoxy-D-xylulose-5-phosphate (DXP). The sequence is that of 1-deoxy-D-xylulose-5-phosphate synthase from Thermobifida fusca (strain YX).